The sequence spans 458 residues: Argininosuccinate lyase (458 aa).

It belongs to the lyase 1 family. Argininosuccinate lyase subfamily.

It localises to the cytoplasm. The enzyme catalyses 2-(N(omega)-L-arginino)succinate = fumarate + L-arginine. It functions in the pathway amino-acid biosynthesis; L-arginine biosynthesis; L-arginine from L-ornithine and carbamoyl phosphate: step 3/3. The chain is Argininosuccinate lyase from Haemophilus ducreyi (strain 35000HP / ATCC 700724).